A 902-amino-acid polypeptide reads, in one-letter code: Methionine--tRNA ligase, cytoplasmic (902 aa).

Positions G74 to P212 constitute a GST C-terminal domain. The short motif at P275–N285 is the 'HIGH' region element. Positions K595–S599 match the 'KMSKS' region motif. K598 is a binding site for ATP. S827 carries the phosphoserine modification. The residue at position 837 (T837) is a Phosphothreonine. Residues H843–K899 enclose the WHEP-TRS domain.

It belongs to the class-I aminoacyl-tRNA synthetase family. In terms of assembly, monomer. Part of a multisubunit complex that groups tRNA ligases for Arg (RARS1), Asp (DARS1), Gln (QARS1), Ile (IARS1), Leu (LARS1), Lys (KARS1), Met (MARS1) the bifunctional ligase for Glu and Pro (EPRS1) and the auxiliary subunits AIMP1/p43, AIMP2/p38 and EEF1E1/p18. Forms a linear complex that contains MARS1, EEF1E1, EPRS1 and AIMP2 that is at the core of the multisubunit complex.

It is found in the cytoplasm. It localises to the cytosol. Its subcellular location is the nucleus. The protein resides in the nucleolus. The catalysed reaction is tRNA(Met) + L-methionine + ATP = L-methionyl-tRNA(Met) + AMP + diphosphate. Catalyzes the specific attachment of an amino acid to its cognate tRNA in a 2 step reaction: the amino acid (AA) is first activated by ATP to form AA-AMP and then transferred to the acceptor end of the tRNA. Plays a role in the synthesis of ribosomal RNA in the nucleolus. This Mus musculus (Mouse) protein is Methionine--tRNA ligase, cytoplasmic (Mars1).